Reading from the N-terminus, the 179-residue chain is MIFYLHGFDATSPGNHEKMRQLQFIDPDVRLISYSTLHPKHDMQHLLKEVAKQMQYCADPAPLMVGVGLGAYWAERIGFLNGLKSVLINPNLHPEETMQGKIDRPEEYADIANKCVSEFRLKNTHRAMCILSRVDEVLDSEATAEALKPYYTIEWDETQAHKFPQLAAHLPKIKAFKLS.

It belongs to the UPF0227 family.

The polypeptide is UPF0227 protein Shewana3_2292 (Shewanella sp. (strain ANA-3)).